Reading from the N-terminus, the 357-residue chain is Acyl-coenzyme A diphosphatase NUDT19 (357 aa).

Positions 10–242 (AATVMLAAGW…IWLAPPQFYE (233 aa)) constitute a Nudix hydrolase domain. Residues 72 to 94 (PRFGLGPEPPRQPPFPGLSHGDA) form a disordered region. Pro residues predominate over residues 78–87 (PEPPRQPPFP). Positions 97–118 (AALPDDVALRICAIRETFEEAG) match the Nudix box motif. 2 residues coordinate Mg(2+): glutamate 112 and glutamate 116. An N6-succinyllysine modification is found at lysine 300. Residues 355–357 (AHL) carry the Microbody targeting signal motif.

This sequence belongs to the Nudix hydrolase family. In terms of assembly, monomer. Mg(2+) serves as cofactor. The cofactor is Mn(2+).

The protein resides in the peroxisome. The enzyme catalyses an acyl-CoA + H2O = an acyl-4'-phosphopantetheine + adenosine 3',5'-bisphosphate + 2 H(+). The catalysed reaction is CoA + H2O = (R)-4'-phosphopantetheine + adenosine 3',5'-bisphosphate + 2 H(+). It catalyses the reaction hexanoyl-CoA + H2O = hexanoyl-4'-phosphopantetheine + adenosine 3',5'-bisphosphate + 2 H(+). It carries out the reaction octanoyl-CoA + H2O = S-octanoyl-4'-phosphopantetheine + adenosine 3',5'-bisphosphate + 2 H(+). The enzyme catalyses butanoyl-CoA + H2O = S-butanoyl-4'-phosphopantetheine + adenosine 3',5'-bisphosphate + 2 H(+). The catalysed reaction is propanoyl-CoA + H2O = propanoyl-4'-phosphopantetheine + adenosine 3',5'-bisphosphate + 2 H(+). It catalyses the reaction malonyl-CoA + H2O = malonyl-4'-phosphopantetheine + adenosine 3',5'-bisphosphate + 2 H(+). It carries out the reaction succinyl-CoA + H2O = succinyl-4'-phosphopantetheine + adenosine 3',5'-bisphosphate + 2 H(+). The enzyme catalyses choloyl-CoA + H2O = S-choloyl-4'-phosphopantetheine + adenosine 3',5'-bisphosphate + 2 H(+). The catalysed reaction is 4,8-dimethylnonanoyl-CoA + H2O = S-(4,8-dimethylnonanoyl)-4'-phosphopantetheine + adenosine 3',5'-bisphosphate + 2 H(+). It catalyses the reaction (9Z,12Z,15Z)-octadecatrienoyl-CoA + H2O = S-(9Z,12Z,15Z-octadecatrienoyl)-4'-phosphopantetheine + adenosine 3',5'-bisphosphate + 2 H(+). It carries out the reaction (9Z,12Z)-octadecadienoyl-CoA + H2O = S-(9Z,12Z-octadecadienoyl)-4'-phosphopantetheine + adenosine 3',5'-bisphosphate + 2 H(+). The enzyme catalyses (9Z)-hexadecenoyl-CoA + H2O = S-(9Z-hexadecenoyl)-4'-phosphopantetheine + adenosine 3',5'-bisphosphate + 2 H(+). The catalysed reaction is (9Z)-tetradecenoyl-CoA + H2O = S-(9Z-tetradecenoyl)-4'-phosphopantetheine + adenosine 3',5'-bisphosphate + 2 H(+). It catalyses the reaction (6Z)-octenoyl-CoA + H2O = S-(6Z-octenoyl)-4'-phosphopantetheine + adenosine 3',5'-bisphosphate + 2 H(+). It carries out the reaction hexadecanoyl-CoA + H2O = S-hexadecanoyl-4'-phosphopantetheine + adenosine 3',5'-bisphosphate + 2 H(+). The enzyme catalyses tetradecanoyl-CoA + H2O = tetradecanoyl-4'-phosphopantetheine + adenosine 3',5'-bisphosphate + 2 H(+). The catalysed reaction is dodecanoyl-CoA + H2O = S-dodecanoyl-4'-phosphopantetheine + adenosine 3',5'-bisphosphate + 2 H(+). It catalyses the reaction a 5'-end CoA-ribonucleoside in mRNA + H2O = a 5'-end phospho-adenosine-phospho-ribonucleoside in mRNA + (R)-4'-phosphopantetheine + 2 H(+). Fatty acyl-coenzyme A (CoA) diphosphatase that hydrolyzes fatty acyl-CoA to yield acyl-4'-phosphopantetheine and adenosine 3',5'-bisphosphate. Mediates the hydrolysis of a wide range of CoA esters, including choloyl-CoA and branched-chain fatty-acyl-CoA esters and at low substrate concentrations medium and long-chain fatty-acyl-CoA esters are the primary substrates. Highest activity seen with medium-chain acyl-CoA esters and higher rates of activity seen with the unsaturated acyl-CoA esters compared with the saturated esters. Exhibits decapping activity towards dpCoA-capped RNAs in vitro. This Mus caroli (Ryukyu mouse) protein is Acyl-coenzyme A diphosphatase NUDT19 (Nudt19).